The sequence spans 121 residues: Trypsin/alpha-amylase inhibitor CMX1/CMX3 (121 aa).

The N-terminal stretch at 1-24 is a signal peptide; it reads MAFKHQLILSTAILLAVLAAASAS.

Belongs to the protease inhibitor I6 (cereal trypsin/alpha-amylase inhibitor) family.

It localises to the secreted. This is Trypsin/alpha-amylase inhibitor CMX1/CMX3 from Triticum aestivum (Wheat).